Reading from the N-terminus, the 235-residue chain is 1-(5-phosphoribosyl)-5-[(5-phosphoribosylamino)methylideneamino] imidazole-4-carboxamide isomerase (235 aa).

Residue D8 is the Proton acceptor of the active site. D129 acts as the Proton donor in catalysis.

It belongs to the HisA/HisF family.

Its subcellular location is the cytoplasm. The enzyme catalyses 1-(5-phospho-beta-D-ribosyl)-5-[(5-phospho-beta-D-ribosylamino)methylideneamino]imidazole-4-carboxamide = 5-[(5-phospho-1-deoxy-D-ribulos-1-ylimino)methylamino]-1-(5-phospho-beta-D-ribosyl)imidazole-4-carboxamide. It functions in the pathway amino-acid biosynthesis; L-histidine biosynthesis; L-histidine from 5-phospho-alpha-D-ribose 1-diphosphate: step 4/9. The protein is 1-(5-phosphoribosyl)-5-[(5-phosphoribosylamino)methylideneamino] imidazole-4-carboxamide isomerase of Thermoanaerobacter sp. (strain X514).